We begin with the raw amino-acid sequence, 739 residues long: UPF0313 protein YgiQ (739 aa).

The Radical SAM core domain maps to 372-650; it reads AYEMIRFSVN…KALLRYHDPA (279 aa). Residues C386, C390, and C393 each coordinate [4Fe-4S] cluster. Residues 685–739 form a disordered region; sequence REARRQNRNTRPALTKHTPMATQRQTPATAKKASSTQSRPVNAGAKKRPKAAVGR. The span at 704–724 shows a compositional bias: polar residues; that stretch reads MATQRQTPATAKKASSTQSRP. The segment covering 729-739 has biased composition (basic residues); the sequence is AKKRPKAAVGR.

Belongs to the UPF0313 family. [4Fe-4S] cluster is required as a cofactor.

This chain is UPF0313 protein YgiQ, found in Shigella flexneri.